Reading from the N-terminus, the 214-residue chain is Large ribosomal subunit protein uL3 (214 aa).

The segment at 134–153 (ATHGNSLSHRAPGSIGQNQT) is disordered. Gln152 bears the N5-methylglutamine mark.

This sequence belongs to the universal ribosomal protein uL3 family. Part of the 50S ribosomal subunit. Forms a cluster with proteins L14 and L19. Post-translationally, methylated by PrmB.

In terms of biological role, one of the primary rRNA binding proteins, it binds directly near the 3'-end of the 23S rRNA, where it nucleates assembly of the 50S subunit. The polypeptide is Large ribosomal subunit protein uL3 (Buchnera aphidicola subsp. Baizongia pistaciae (strain Bp)).